The chain runs to 258 residues: Isoprenyl transferase 2 (258 aa).

Asp-35 is a catalytic residue. Asp-35 contributes to the Mg(2+) binding site. Substrate is bound by residues 36–39 (GNRR), Trp-40, Arg-50, and 81–83 (SDD). The active-site Proton acceptor is the Asn-84. Residues Arg-87, Arg-207, and 213–215 (RLS) contribute to the substrate site. Glu-226 lines the Mg(2+) pocket.

The protein belongs to the UPP synthase family. In terms of assembly, homodimer. Mg(2+) is required as a cofactor.

Functionally, catalyzes the condensation of isopentenyl diphosphate (IPP) with allylic pyrophosphates generating different type of terpenoids. In Streptomyces coelicolor (strain ATCC BAA-471 / A3(2) / M145), this protein is Isoprenyl transferase 2.